A 66-amino-acid polypeptide reads, in one-letter code: MPKMKTHRASAKRFKRTANGGLKRHHAFTGHRFHGKTKKQRRHLRKPAMVSRSDMKRIKQMVAQMH.

Residues methionine 1–lysine 46 show a composition bias toward basic residues. Positions methionine 1 to arginine 52 are disordered.

Belongs to the bacterial ribosomal protein bL35 family.

The sequence is that of Large ribosomal subunit protein bL35 from Lactobacillus acidophilus (strain ATCC 700396 / NCK56 / N2 / NCFM).